A 627-amino-acid chain; its full sequence is tRNA uridine 5-carboxymethylaminomethyl modification enzyme MnmG (627 aa).

Residues 16–21 (GAGHAG), Val128, and Ser183 each bind FAD. 277 to 291 (GPRYCPSIEDKIVRF) serves as a coordination point for NAD(+). Gln374 serves as a coordination point for FAD.

It belongs to the MnmG family. As to quaternary structure, homodimer. Heterotetramer of two MnmE and two MnmG subunits. Requires FAD as cofactor.

It localises to the cytoplasm. Its function is as follows. NAD-binding protein involved in the addition of a carboxymethylaminomethyl (cmnm) group at the wobble position (U34) of certain tRNAs, forming tRNA-cmnm(5)s(2)U34. The protein is tRNA uridine 5-carboxymethylaminomethyl modification enzyme MnmG of Finegoldia magna (strain ATCC 29328 / DSM 20472 / WAL 2508) (Peptostreptococcus magnus).